Consider the following 663-residue polypeptide: Probable serine/threonine-protein kinase DDB_G0283301 (663 aa).

The 275-residue stretch at 312 to 586 (IERRNELGRG…EECVERLITL (275 aa)) folds into the Protein kinase domain. ATP-binding positions include 318–326 (LGRGGNGTV) and Lys-348. The active-site Proton acceptor is Asp-440.

The protein belongs to the protein kinase superfamily. Ser/Thr protein kinase family.

It carries out the reaction L-seryl-[protein] + ATP = O-phospho-L-seryl-[protein] + ADP + H(+). It catalyses the reaction L-threonyl-[protein] + ATP = O-phospho-L-threonyl-[protein] + ADP + H(+). This is Probable serine/threonine-protein kinase DDB_G0283301 from Dictyostelium discoideum (Social amoeba).